Consider the following 512-residue polypeptide: Monocarboxylate transporter 14 (512 aa).

The Cytoplasmic portion of the chain corresponds to 1 to 29; sequence MYTSHEDIGYDLEDDRKAKNKKTLKPHPD. The next 12 helical transmembrane spans lie at 30 to 50, 76 to 96, 105 to 125, 129 to 149, 161 to 181, 193 to 211, 317 to 337, 355 to 375, 381 to 401, 410 to 430, 446 to 466, and 476 to 496; these read IDGG…ILIM, WVSS…GLFI, AIIG…AANV, FITF…PAVV, LAQG…TVLL, AMFI…GALM, MFVA…IPFI, FPLT…LGAV, ISVW…IFLL, LAVI…MPVV, IIIC…GWIF, and FYIC…QPCI. Residues 497-512 lie on the Cytoplasmic side of the membrane; it reads QMIDQSRRKCIEGAHV.

The protein belongs to the major facilitator superfamily. Monocarboxylate porter (TC 2.A.1.13) family.

The protein resides in the cell membrane. In terms of biological role, proton-linked monocarboxylate transporter. May catalyze the transport of monocarboxylates across the plasma membrane. This Mus musculus (Mouse) protein is Monocarboxylate transporter 14 (Slc16a14).